We begin with the raw amino-acid sequence, 103 residues long: Integration host factor subunit alpha (103 aa).

Positions 51-73 (FGNFQLRDKPQRPGRNPKTGEEI) are disordered.

It belongs to the bacterial histone-like protein family. As to quaternary structure, heterodimer of an alpha and a beta chain.

Functionally, this protein is one of the two subunits of integration host factor, a specific DNA-binding protein that functions in genetic recombination as well as in transcriptional and translational control. In Azoarcus sp. (strain BH72), this protein is Integration host factor subunit alpha.